Reading from the N-terminus, the 264-residue chain is Small ribosomal subunit protein eS1 (264 aa).

The tract at residues 232–264 is disordered; it reads HGEGGGAGKPSGDEAGTKVERADGYEPPVQESV. Over residues 242–255 the composition is skewed to basic and acidic residues; that stretch reads SGDEAGTKVERADG.

This sequence belongs to the eukaryotic ribosomal protein eS1 family. Component of the small ribosomal subunit. Mature ribosomes consist of a small (40S) and a large (60S) subunit. The 40S subunit contains about 33 different proteins and 1 molecule of RNA (18S). The 60S subunit contains about 49 different proteins and 3 molecules of RNA (28S, 5.8S and 5S). Part of the small subunit (SSU) processome, composed of more than 70 proteins and the RNA chaperone small nucleolar RNA (snoRNA) U3.

The protein resides in the cytoplasm. The protein localises to the nucleus. Its subcellular location is the nucleolus. Functionally, component of the small ribosomal subunit. The ribosome is a large ribonucleoprotein complex responsible for the synthesis of proteins in the cell. Part of the small subunit (SSU) processome, first precursor of the small eukaryotic ribosomal subunit. During the assembly of the SSU processome in the nucleolus, many ribosome biogenesis factors, an RNA chaperone and ribosomal proteins associate with the nascent pre-rRNA and work in concert to generate RNA folding, modifications, rearrangements and cleavage as well as targeted degradation of pre-ribosomal RNA by the RNA exosome. May play a role during erythropoiesis. The protein is Small ribosomal subunit protein eS1 of Taeniopygia guttata (Zebra finch).